The following is a 171-amino-acid chain: 3-hydroxydecanoyl-[acyl-carrier-protein] dehydratase (171 aa).

His70 is an active-site residue.

Belongs to the thioester dehydratase family. FabA subfamily. As to quaternary structure, homodimer.

Its subcellular location is the cytoplasm. It carries out the reaction a (3R)-hydroxyacyl-[ACP] = a (2E)-enoyl-[ACP] + H2O. It catalyses the reaction (3R)-hydroxydecanoyl-[ACP] = (2E)-decenoyl-[ACP] + H2O. The enzyme catalyses (2E)-decenoyl-[ACP] = (3Z)-decenoyl-[ACP]. The protein operates within lipid metabolism; fatty acid biosynthesis. In terms of biological role, necessary for the introduction of cis unsaturation into fatty acids. Catalyzes the dehydration of (3R)-3-hydroxydecanoyl-ACP to E-(2)-decenoyl-ACP and then its isomerization to Z-(3)-decenoyl-ACP. Can catalyze the dehydratase reaction for beta-hydroxyacyl-ACPs with saturated chain lengths up to 16:0, being most active on intermediate chain length. This chain is 3-hydroxydecanoyl-[acyl-carrier-protein] dehydratase, found in Pseudomonas putida (strain ATCC 700007 / DSM 6899 / JCM 31910 / BCRC 17059 / LMG 24140 / F1).